The following is a 105-amino-acid chain: UPF0235 protein RPR_04990 (105 aa).

It belongs to the UPF0235 family.

The chain is UPF0235 protein RPR_04990 from Rickettsia peacockii (strain Rustic).